Here is a 59-residue protein sequence, read N- to C-terminus: UPF0509 protein YciZ (59 aa).

This sequence belongs to the UPF0509 family.

The protein is UPF0509 protein YciZ of Salmonella agona (strain SL483).